The sequence spans 221 residues: Oxaloacetate tautomerase FAHD1, mitochondrial (221 aa).

The N-terminal 24 residues, 1–24, are a transit peptide targeting the mitochondrion; sequence MASTKPLSRFWEWGKNIVCVGRNY. An oxalate-binding site is contributed by arginine 22. Phosphoserine is present on serine 37. Mg(2+) contacts are provided by glutamate 68, glutamate 70, and aspartate 99. At lysine 110 the chain carries N6-acetyllysine. Residue lysine 112 is modified to N6-succinyllysine. Lysine 120 contacts oxalate.

The protein belongs to the FAH family. Homodimer. Mg(2+) serves as cofactor. Requires Mn(2+) as cofactor. As to expression, ubiquitous with higher expression in the liver and the kidney (at protein level).

The protein localises to the mitochondrion. It localises to the cytoplasm. Its subcellular location is the cytosol. It carries out the reaction oxaloacetate = enol-oxaloacetate. The enzyme catalyses oxaloacetate + H(+) = pyruvate + CO2. The catalysed reaction is a 3-acylpyruvate + H2O = a carboxylate + pyruvate + H(+). It catalyses the reaction acetylpyruvate + H2O = acetate + pyruvate + H(+). It carries out the reaction 3-fumarylpyruvate + H2O = fumarate + pyruvate + H(+). Its activity is regulated as follows. Oxaloacetate decarboxylation is potently and competitively inhibited by oxalate. Tautomerase that converts enol-oxaloacetate, a strong inhibitor of succinate dehydrogenase, to the physiological keto form of oxaloacetate. It is thereby required to maximize aerobic respiration efficiency by preventing succinate dehydrogenase inhibition. Also acts as a weak oxaloacetate decarboxylase (ODx), catalyzing the decarboxylation of oxaloacetate (OAA) to pyruvate and CO(2), and as such is likely a regulatory enzyme in the TCA cycle. Also displays acylpyruvase activity, being able to hydrolyze acetylpyruvate and fumarylpyruvate in vitro. In Mus musculus (Mouse), this protein is Oxaloacetate tautomerase FAHD1, mitochondrial.